Here is a 406-residue protein sequence, read N- to C-terminus: MTAASLVTLALSLSLAQAAGHAGEHGAPAPEVATPAEGHGARDAAGAATDPHGAAAEHGAAAHEDPAQHGAAGAEAGHDESLGAVMMHHVADGYVLELPGFCGGLSWACHVDLRDVFGTEHVSEIDAHGHAVERNVSGPLVFGKVDMTPTKHVVMMWIASAILLLVVFAAVRKKSLVPRGLYNFIEMLVQFVRNEIAVKNIGEKDADRFVPYLVSAFFFILFLNLFGLVPFAATATANISVTVMMAVFTFLITQYAQIRAVGVGGYFAHMTGGVPKSLWPLWFIMIPVEFLGLFTKPFALTVRLFANMVAGHFVILALLGLIFALNSQWIAIASVPMALSIYMLELFVAFVQAYIFTMLSSLFIGSVVAHHGHEDEHEEHGHGAAATGGAHGSHGSHVAGASPGHG.

2 stretches are compositionally biased toward low complexity: residues 22 to 31 (AGEHGAPAPE) and 43 to 59 (DAAG…AEHG). The tract at residues 22–76 (AGEHGAPAPEVATPAEGHGARDAAGAATDPHGAAAEHGAAAHEDPAQHGAAGAEA) is disordered. 6 consecutive transmembrane segments (helical) span residues 151–171 (KHVV…FAAV), 209–229 (FVPY…FGLV), 232–252 (AATA…TFLI), 278–298 (LWPL…TKPF), 304–324 (LFAN…LIFA), and 351–371 (VQAY…VAHH). The disordered stretch occupies residues 375–406 (DEHEEHGHGAAATGGAHGSHGSHVAGASPGHG). Over residues 383 to 406 (GAAATGGAHGSHGSHVAGASPGHG) the composition is skewed to low complexity.

Belongs to the ATPase A chain family. In terms of assembly, F-type ATPases have 2 components, CF(1) - the catalytic core - and CF(0) - the membrane proton channel. CF(1) has five subunits: alpha(3), beta(3), gamma(1), delta(1), epsilon(1). CF(0) has three main subunits: a(1), b(2) and c(9-12). The alpha and beta chains form an alternating ring which encloses part of the gamma chain. CF(1) is attached to CF(0) by a central stalk formed by the gamma and epsilon chains, while a peripheral stalk is formed by the delta and b chains.

The protein resides in the cell inner membrane. In terms of biological role, key component of the proton channel; it plays a direct role in the translocation of protons across the membrane. This Anaeromyxobacter sp. (strain Fw109-5) protein is ATP synthase subunit a.